The sequence spans 257 residues: UPF0246 protein swp_3736 (257 aa).

Belongs to the UPF0246 family.

The polypeptide is UPF0246 protein swp_3736 (Shewanella piezotolerans (strain WP3 / JCM 13877)).